The primary structure comprises 315 residues: Fe(3+)-citrate-binding protein YfmC (315 aa).

An N-terminal signal peptide occupies residues 1–18 (MRTYSNKLIAIMSVLLLA). C19 is lipidated: N-palmitoyl cysteine. The S-diacylglycerol cysteine moiety is linked to residue C19. Residues 27-36 (SSQNNNGSGK) show a composition bias toward low complexity. The interval 27–52 (SSQNNNGSGKSESKDSRVIHDEEGKT) is disordered. Residues 37-51 (SESKDSRVIHDEEGK) are compositionally biased toward basic and acidic residues. The Fe/B12 periplasmic-binding domain maps to 60–315 (RVVVLELSFL…KDVLKKVYNK (256 aa)).

Belongs to the bacterial solute-binding protein 8 family. The complex is composed of one ATP-binding protein (YfmF), two transmembrane proteins (YfmD and YfmE) and a solute-binding protein (YfmC).

The protein resides in the cell membrane. Functionally, part of the ABC transporter complex YfmCDEF involved in citrate-dependent Fe(3+) import. Binds citrate-dependent Fe(3+) and delivers it to the surface of YfmDE. This chain is Fe(3+)-citrate-binding protein YfmC (yfmC), found in Bacillus subtilis (strain 168).